Consider the following 220-residue polypeptide: Putative cobalt transport protein CbiM (220 aa).

6 consecutive transmembrane segments (helical) span residues 6–26 (GFLP…VISY), 45–65 (IAVA…SVTG), 74–94 (GIAV…IVLL), 107–127 (TLGA…WVVF), 153–173 (LVTS…AGVV), and 188–208 (IPIG…IAMS).

Belongs to the CbiM family. Forms an energy-coupling factor (ECF) transporter complex composed of an ATP-binding protein (A component, CbiO), a transmembrane protein (T component, CbiQ) and 2 possible substrate-capture proteins (S components, CbiM and CbiN) of unknown stoichimetry.

It localises to the cell membrane. Its pathway is cofactor biosynthesis; adenosylcobalamin biosynthesis. Functionally, part of the energy-coupling factor (ECF) transporter complex CbiMNOQ involved in cobalt import. This is Putative cobalt transport protein CbiM from Halobacterium salinarum (strain ATCC 29341 / DSM 671 / R1).